A 598-amino-acid polypeptide reads, in one-letter code: Pescadillo homolog (598 aa).

The tract at residues 296-317 is disordered; it reads QAMKADSKDKDDNSNDEAPENV. One can recognise a BRCT domain in the interval 345–439; that stretch reads PTATLFEDFV…ELLSANLYLP (95 aa). Disordered regions lie at residues 452–501, 515–544, and 564–598; these read DALG…EDVE, GIAY…EDEE, and MKYS…VEKK. Acidic residues predominate over residues 463–485; sequence ESEDESSDSSEESDSEIENEEED. Basic and acidic residues-rich tracts occupy residues 520–532, 570–579, and 586–598; these read KAKD…DVAS, QKEDKIEELK, and AKKE…VEKK. Residues 557–598 adopt a coiled-coil conformation; it reads QRKLYKKMKYSNQQKEDKIEELKKKKKQLAKKEKTLKKVEKK.

It belongs to the pescadillo family. Component of the NOP7 complex, composed of ERB1, NOP7 and YTM1. The complex is held together by ERB1, which interacts with NOP7 via its N-terminal domain and with YTM1 via a high-affinity interaction between the seven-bladed beta-propeller domains of the 2 proteins. The NOP7 complex associates with the 66S pre-ribosome.

Its subcellular location is the nucleus. It is found in the nucleolus. The protein localises to the nucleoplasm. In terms of biological role, component of the NOP7 complex, which is required for maturation of the 25S and 5.8S ribosomal RNAs and formation of the 60S ribosome. The polypeptide is Pescadillo homolog (Candida glabrata (strain ATCC 2001 / BCRC 20586 / JCM 3761 / NBRC 0622 / NRRL Y-65 / CBS 138) (Yeast)).